The chain runs to 308 residues: UDP-N-acetylenolpyruvoylglucosamine reductase (308 aa).

One can recognise an FAD-binding PCMH-type domain in the interval 22 to 185 (RVGGPADWLF…TEATFRAEAG (164 aa)). Residue Arg165 is part of the active site. A compositionally biased stretch (basic and acidic residues) spans 197 to 211 (QIARRDSSQPTKERS). The segment at 197–228 (QIARRDSSQPTKERSAGSTFRNPAGFSSTGRA) is disordered. Over residues 212–226 (AGSTFRNPAGFSSTG) the composition is skewed to polar residues. The Proton donor role is filled by Ser214. Residue Glu296 is part of the active site.

The protein belongs to the MurB family. Requires FAD as cofactor.

The protein localises to the cytoplasm. The catalysed reaction is UDP-N-acetyl-alpha-D-muramate + NADP(+) = UDP-N-acetyl-3-O-(1-carboxyvinyl)-alpha-D-glucosamine + NADPH + H(+). It participates in cell wall biogenesis; peptidoglycan biosynthesis. Cell wall formation. This chain is UDP-N-acetylenolpyruvoylglucosamine reductase, found in Cereibacter sphaeroides (strain ATCC 17029 / ATH 2.4.9) (Rhodobacter sphaeroides).